Reading from the N-terminus, the 415-residue chain is MTSPVLNPALPATAAAPVAATPSAVGSAGIVAPVFLRFDEPLPLASGQTLNGYELAIETYGTLNAQRTNAVLVCHALNASHHVAGVSADNPKDVGWWDNMVGPGKPVDTNRYFVIGVNNLGSCFGSTGPASINPATGRPWGAAFPVLTVEDWVRAQARVADHFGIERFAAVMGGSLGGMQALSWAITCPQRVANCVVVASTPRLSAQNIGFNEVARRAIITDPDFHGGDYYAHGTVPGRGLSVARMIGHITYLSDDDMAEKFGRTRREPAADGAYRYGYDVEFEVESYLRYQGEKFSRYFDANTYLLITRALDYFDPARATGGDLARALAPATADFLLVSFSTDWRFPPERSREMVRALLKNGSPVTYAEIDAPHGHDAFLLDDARYHAVVRGYYERIARELGLNGAVAPEGNPA.

An AB hydrolase-1 domain is found at 69–383 (NAVLVCHALN…PHGHDAFLLD (315 aa)). Ser-175 acts as the Nucleophile in catalysis. Arg-245 serves as a coordination point for substrate. Active-site residues include Asp-344 and His-377. Asp-378 is a binding site for substrate.

The protein belongs to the AB hydrolase superfamily. MetX family. As to quaternary structure, homodimer.

The protein resides in the cytoplasm. It catalyses the reaction L-homoserine + succinyl-CoA = O-succinyl-L-homoserine + CoA. It functions in the pathway amino-acid biosynthesis; L-methionine biosynthesis via de novo pathway; O-succinyl-L-homoserine from L-homoserine: step 1/1. In terms of biological role, transfers a succinyl group from succinyl-CoA to L-homoserine, forming succinyl-L-homoserine. This is Homoserine O-succinyltransferase from Bordetella parapertussis (strain 12822 / ATCC BAA-587 / NCTC 13253).